We begin with the raw amino-acid sequence, 220 residues long: Ribosome maturation factor RimP (220 aa).

Residues 173 to 220 (KKDKEERRQRKKARRRGEKGGVGDDGTAGEEQPDSAREGPARSASEGE) form a disordered region.

Belongs to the RimP family.

It localises to the cytoplasm. In terms of biological role, required for maturation of 30S ribosomal subunits. The polypeptide is Ribosome maturation factor RimP (Chelativorans sp. (strain BNC1)).